Reading from the N-terminus, the 271-residue chain is uncharacterized protein (271 aa).

The region spanning 24–124 (PIILLVHGGG…QVHVMIPHEP (101 aa)) is the AB hydrolase-1 domain.

The protein belongs to the AB hydrolase superfamily.

This is an uncharacterized protein from Bacillus subtilis (strain 168).